The chain runs to 121 residues: MSRARSGKVNKNRHKKILKLAKGYRGRAKNCFRIAIQKVEKALQYSYRDRRNRKRQFRALWIQRINAAVRQYDITYSQFINGLKQANITVDRKVMADLAVHNADSFVHLVELTKKSLAKTA.

It belongs to the bacterial ribosomal protein bL20 family.

In terms of biological role, binds directly to 23S ribosomal RNA and is necessary for the in vitro assembly process of the 50S ribosomal subunit. It is not involved in the protein synthesizing functions of that subunit. This Orientia tsutsugamushi (strain Ikeda) (Rickettsia tsutsugamushi) protein is Large ribosomal subunit protein bL20.